The chain runs to 302 residues: Quinolinate synthase (302 aa).

Iminosuccinate is bound by residues His-24 and Ser-41. Position 86 (Cys-86) interacts with [4Fe-4S] cluster. Iminosuccinate contacts are provided by residues 112–114 (YVN) and Ser-129. Cys-171 serves as a coordination point for [4Fe-4S] cluster. Residues 197-199 (HPE) and Thr-214 contribute to the iminosuccinate site. Residue Cys-259 participates in [4Fe-4S] cluster binding.

Belongs to the quinolinate synthase family. Type 2 subfamily. [4Fe-4S] cluster is required as a cofactor.

Its subcellular location is the cytoplasm. The enzyme catalyses iminosuccinate + dihydroxyacetone phosphate = quinolinate + phosphate + 2 H2O + H(+). It functions in the pathway cofactor biosynthesis; NAD(+) biosynthesis; quinolinate from iminoaspartate: step 1/1. Catalyzes the condensation of iminoaspartate with dihydroxyacetone phosphate to form quinolinate. In Dehalococcoides mccartyi (strain ATCC BAA-2266 / KCTC 15142 / 195) (Dehalococcoides ethenogenes (strain 195)), this protein is Quinolinate synthase.